The following is a 63-amino-acid chain: MVEREKKRQKLVLKGKLSDTRLHNRCWRCGRPRGYIRDFGLCRICFREMAHQGLLPGVVKASW.

Zn(2+) is bound by residues Cys26, Cys29, Cys42, and Cys45.

It belongs to the universal ribosomal protein uS14 family. Zinc-binding uS14 subfamily. In terms of assembly, part of the 30S ribosomal subunit. Contacts proteins S3 and S10. It depends on Zn(2+) as a cofactor.

Binds 16S rRNA, required for the assembly of 30S particles and may also be responsible for determining the conformation of the 16S rRNA at the A site. The sequence is that of Small ribosomal subunit protein uS14 from Gloeobacter violaceus (strain ATCC 29082 / PCC 7421).